The chain runs to 239 residues: Geranylgeranylglyceryl phosphate synthase (239 aa).

Mg(2+) is bound by residues aspartate 18 and serine 45. Residues 166–172 (YLEAGSG), 197–198 (GG), and 219–220 (GT) contribute to the sn-glycerol 1-phosphate site.

The protein belongs to the GGGP/HepGP synthase family. Group II subfamily. Mg(2+) serves as cofactor.

It is found in the cytoplasm. The catalysed reaction is sn-glycerol 1-phosphate + (2E,6E,10E)-geranylgeranyl diphosphate = sn-3-O-(geranylgeranyl)glycerol 1-phosphate + diphosphate. The protein operates within membrane lipid metabolism; glycerophospholipid metabolism. In terms of biological role, prenyltransferase that catalyzes the transfer of the geranylgeranyl moiety of geranylgeranyl diphosphate (GGPP) to the C3 hydroxyl of sn-glycerol-1-phosphate (G1P). This reaction is the first ether-bond-formation step in the biosynthesis of archaeal membrane lipids. The protein is Geranylgeranylglyceryl phosphate synthase of Pyrobaculum arsenaticum (strain DSM 13514 / JCM 11321 / PZ6).